The sequence spans 132 residues: Small ribosomal subunit protein uS8 (132 aa).

Belongs to the universal ribosomal protein uS8 family. Part of the 30S ribosomal subunit. Contacts proteins S5 and S12.

In terms of biological role, one of the primary rRNA binding proteins, it binds directly to 16S rRNA central domain where it helps coordinate assembly of the platform of the 30S subunit. This chain is Small ribosomal subunit protein uS8, found in Bartonella quintana (strain Toulouse) (Rochalimaea quintana).